The following is a 153-amino-acid chain: FAD synthase (153 aa).

ATP contacts are provided by residues 9-10 (TF), 14-17 (HPGH), and Asp92.

It belongs to the archaeal FAD synthase family. In terms of assembly, homodimer. A divalent metal cation serves as cofactor.

It catalyses the reaction FMN + ATP + H(+) = FAD + diphosphate. It participates in cofactor biosynthesis; FAD biosynthesis; FAD from FMN: step 1/1. Its function is as follows. Catalyzes the transfer of the AMP portion of ATP to flavin mononucleotide (FMN) to produce flavin adenine dinucleotide (FAD) coenzyme. The protein is FAD synthase of Halorubrum lacusprofundi (strain ATCC 49239 / DSM 5036 / JCM 8891 / ACAM 34).